The sequence spans 508 residues: Steroid 17-alpha-hydroxylase/17,20 lyase (508 aa).

Cysteine 445 is a heme binding site.

This sequence belongs to the cytochrome P450 family. The cofactor is heme.

The protein localises to the membrane. The enzyme catalyses a C21-steroid + reduced [NADPH--hemoprotein reductase] + O2 = a 17alpha-hydroxy-C21-steroid + oxidized [NADPH--hemoprotein reductase] + H2O + H(+). The catalysed reaction is 17alpha-hydroxyprogesterone + reduced [NADPH--hemoprotein reductase] + O2 = androst-4-ene-3,17-dione + acetate + oxidized [NADPH--hemoprotein reductase] + H2O + 2 H(+). It carries out the reaction 17alpha-hydroxypregnenolone + reduced [NADPH--hemoprotein reductase] + O2 = 3beta-hydroxyandrost-5-en-17-one + acetate + oxidized [NADPH--hemoprotein reductase] + H2O + 2 H(+). The protein operates within lipid metabolism; steroid biosynthesis. Conversion of pregnenolone and progesterone to their 17-alpha-hydroxylated products and subsequently to dehydroepiandrosterone (DHEA) and androstenedione. Catalyzes both the 17-alpha-hydroxylation and the 17,20-lyase reaction. In Gallus gallus (Chicken), this protein is Steroid 17-alpha-hydroxylase/17,20 lyase (CYP17A1).